We begin with the raw amino-acid sequence, 228 residues long: L-ribulose-5-phosphate 4-epimerase UlaF (228 aa).

Residues 26–27, 43–44, and 72–73 contribute to the substrate site; these read GN, SG, and SS. Zn(2+) contacts are provided by D74, H93, and H95. Residue D118 is the Proton donor/acceptor of the active site. H167 is a binding site for Zn(2+). Y225 functions as the Proton donor/acceptor in the catalytic mechanism.

Belongs to the aldolase class II family. AraD/FucA subfamily. Requires Zn(2+) as cofactor.

It catalyses the reaction L-ribulose 5-phosphate = D-xylulose 5-phosphate. It functions in the pathway cofactor degradation; L-ascorbate degradation; D-xylulose 5-phosphate from L-ascorbate: step 4/4. Its function is as follows. Catalyzes the isomerization of L-ribulose 5-phosphate to D-xylulose 5-phosphate. Is involved in the anaerobic L-ascorbate utilization. The sequence is that of L-ribulose-5-phosphate 4-epimerase UlaF from Shigella dysenteriae serotype 1 (strain Sd197).